The sequence spans 343 residues: Protein RecA (343 aa).

66-73 (GPESSGKT) lines the ATP pocket.

This sequence belongs to the RecA family.

Its subcellular location is the cytoplasm. Can catalyze the hydrolysis of ATP in the presence of single-stranded DNA, the ATP-dependent uptake of single-stranded DNA by duplex DNA, and the ATP-dependent hybridization of homologous single-stranded DNAs. It interacts with LexA causing its activation and leading to its autocatalytic cleavage. This Rickettsia conorii (strain ATCC VR-613 / Malish 7) protein is Protein RecA.